The primary structure comprises 265 residues: Hydroxyethylthiazole kinase 2 (265 aa).

Residue M39 participates in substrate binding. ATP-binding residues include K115 and T168. Position 195 (G195) interacts with substrate.

This sequence belongs to the Thz kinase family. Mg(2+) is required as a cofactor.

The catalysed reaction is 5-(2-hydroxyethyl)-4-methylthiazole + ATP = 4-methyl-5-(2-phosphooxyethyl)-thiazole + ADP + H(+). It functions in the pathway cofactor biosynthesis; thiamine diphosphate biosynthesis; 4-methyl-5-(2-phosphoethyl)-thiazole from 5-(2-hydroxyethyl)-4-methylthiazole: step 1/1. Its function is as follows. Catalyzes the phosphorylation of the hydroxyl group of 4-methyl-5-beta-hydroxyethylthiazole (THZ). This Clostridium botulinum (strain ATCC 19397 / Type A) protein is Hydroxyethylthiazole kinase 2.